The following is a 201-amino-acid chain: Peptide deformylase (201 aa).

Fe cation-binding residues include C121 and H163. E164 is a catalytic residue. Residue H167 coordinates Fe cation.

The protein belongs to the polypeptide deformylase family. The cofactor is Fe(2+).

It catalyses the reaction N-terminal N-formyl-L-methionyl-[peptide] + H2O = N-terminal L-methionyl-[peptide] + formate. Removes the formyl group from the N-terminal Met of newly synthesized proteins. Requires at least a dipeptide for an efficient rate of reaction. N-terminal L-methionine is a prerequisite for activity but the enzyme has broad specificity at other positions. The sequence is that of Peptide deformylase from Synechococcus sp. (strain CC9902).